The following is a 302-amino-acid chain: Oxygen-dependent coproporphyrinogen-III oxidase (302 aa).

S94 serves as a coordination point for substrate. A divalent metal cation-binding residues include H98 and H108. Catalysis depends on H108, which acts as the Proton donor. 110–112 contributes to the substrate binding site; sequence NVR. Positions 147 and 177 each coordinate a divalent metal cation. Residues 242–277 are important for dimerization; it reads YVEFNLVWDRGTLFGLQSGGRTESILMSMPPLARWE. Position 260 to 262 (260 to 262) interacts with substrate; that stretch reads GGR.

Belongs to the aerobic coproporphyrinogen-III oxidase family. In terms of assembly, homodimer. Requires a divalent metal cation as cofactor.

The protein localises to the cytoplasm. It catalyses the reaction coproporphyrinogen III + O2 + 2 H(+) = protoporphyrinogen IX + 2 CO2 + 2 H2O. The protein operates within porphyrin-containing compound metabolism; protoporphyrin-IX biosynthesis; protoporphyrinogen-IX from coproporphyrinogen-III (O2 route): step 1/1. In terms of biological role, involved in the heme biosynthesis. Catalyzes the aerobic oxidative decarboxylation of propionate groups of rings A and B of coproporphyrinogen-III to yield the vinyl groups in protoporphyrinogen-IX. This chain is Oxygen-dependent coproporphyrinogen-III oxidase, found in Photorhabdus laumondii subsp. laumondii (strain DSM 15139 / CIP 105565 / TT01) (Photorhabdus luminescens subsp. laumondii).